The chain runs to 185 residues: uncharacterized protein (185 aa).

The G domain maps to 17-137 (GKSSIMNALF…QKPIIVVINK (121 aa)).

This is an uncharacterized protein from Methanocaldococcus jannaschii (strain ATCC 43067 / DSM 2661 / JAL-1 / JCM 10045 / NBRC 100440) (Methanococcus jannaschii).